The sequence spans 751 residues: Translation initiation factor IF-2, chloroplastic (751 aa).

The interval 86–156 (KKEKSKFRKD…KSKKQTSAKN (71 aa)) is disordered. A compositionally biased stretch (basic and acidic residues) spans 93 to 106 (RKDEDYDSLKREDN). The segment covering 129-143 (VSNTNTLNKKNVVKS) has biased composition (low complexity). The tr-type G domain maps to 250–423 (KRPPVIAIMG…ILVSEIEDLK (174 aa)). The G1 stretch occupies residues 259–266 (GHVDHGKT). 259–266 (GHVDHGKT) contacts GTP. Positions 284-288 (GITQK) are G2. The tract at residues 309–312 (DTPG) is G3. GTP is bound by residues 309–313 (DTPGH) and 363–366 (NKID). A G4 region spans residues 363-366 (NKID). A G5 region spans residues 399–401 (SAM).

This sequence belongs to the TRAFAC class translation factor GTPase superfamily. Classic translation factor GTPase family. IF-2 subfamily.

The protein localises to the plastid. Its subcellular location is the chloroplast. Its function is as follows. One of the essential components for the initiation of protein synthesis. Protects formylmethionyl-tRNA from spontaneous hydrolysis and promotes its binding to the 30S ribosomal subunits. Also involved in the hydrolysis of GTP during the formation of the 70S ribosomal complex. The protein is Translation initiation factor IF-2, chloroplastic (infB) of Rhodomonas salina (Cryptomonas salina).